The chain runs to 388 residues: MNLHEYQAKQLFARYGMPAPTGYACTTPREAEEAASKIGAGPWVVKCQVHAGGRGKAGGVKLVNSKEDIRAFAEQWLGKKLVTYQTDANGQPVHQILVEAATDIDKELYLGAVIDRSSRRVVFMASTEGGVEIEKVAEETPELIHKIALDPLTGPQPYQGRELAFKLGLTGKQVGQFTKIFMGLATLFLERDLAMVEINPLVVTKQGDLICLDGKLGADGNALFRQPELREMRDPSQEDAREAHAAQWELNYVALDGNIGCMVNGAGLAMGTMDIVKLHGGEPANFLDVGGGATKERVTEAFKIILSDDKVKAVFVNIFGGIVRCDLIADGIIGAVEEVGVNVPVVVRLEGNNAELGAKKLADSGLNIIAATSLTDAAQQVVAAVGAK.

The region spanning 9–244 (KQLFARYGMP…PSQEDAREAH (236 aa)) is the ATP-grasp domain. Residues Lys46, 53–55 (GRG), Glu99, Thr102, and Glu107 contribute to the ATP site. Asn199 and Asp213 together coordinate Mg(2+). Substrate contacts are provided by residues Asn264 and 321–323 (GIV).

Belongs to the succinate/malate CoA ligase beta subunit family. As to quaternary structure, heterotetramer of two alpha and two beta subunits. Mg(2+) is required as a cofactor.

It carries out the reaction succinate + ATP + CoA = succinyl-CoA + ADP + phosphate. The enzyme catalyses GTP + succinate + CoA = succinyl-CoA + GDP + phosphate. Its pathway is carbohydrate metabolism; tricarboxylic acid cycle; succinate from succinyl-CoA (ligase route): step 1/1. Its function is as follows. Succinyl-CoA synthetase functions in the citric acid cycle (TCA), coupling the hydrolysis of succinyl-CoA to the synthesis of either ATP or GTP and thus represents the only step of substrate-level phosphorylation in the TCA. The beta subunit provides nucleotide specificity of the enzyme and binds the substrate succinate, while the binding sites for coenzyme A and phosphate are found in the alpha subunit. The sequence is that of Succinate--CoA ligase [ADP-forming] subunit beta from Yersinia pseudotuberculosis serotype O:1b (strain IP 31758).